A 354-amino-acid chain; its full sequence is UDP-N-acetylglucosamine--N-acetylmuramyl-(pentapeptide) pyrophosphoryl-undecaprenol N-acetylglucosamine transferase (354 aa).

UDP-N-acetyl-alpha-D-glucosamine contacts are provided by residues 11–13 (TAG), arginine 164, serine 194, and glutamine 289.

This sequence belongs to the glycosyltransferase 28 family. MurG subfamily.

It localises to the cell membrane. It carries out the reaction di-trans,octa-cis-undecaprenyl diphospho-N-acetyl-alpha-D-muramoyl-L-alanyl-D-glutamyl-meso-2,6-diaminopimeloyl-D-alanyl-D-alanine + UDP-N-acetyl-alpha-D-glucosamine = di-trans,octa-cis-undecaprenyl diphospho-[N-acetyl-alpha-D-glucosaminyl-(1-&gt;4)]-N-acetyl-alpha-D-muramoyl-L-alanyl-D-glutamyl-meso-2,6-diaminopimeloyl-D-alanyl-D-alanine + UDP + H(+). It functions in the pathway cell wall biogenesis; peptidoglycan biosynthesis. Functionally, cell wall formation. Catalyzes the transfer of a GlcNAc subunit on undecaprenyl-pyrophosphoryl-MurNAc-pentapeptide (lipid intermediate I) to form undecaprenyl-pyrophosphoryl-MurNAc-(pentapeptide)GlcNAc (lipid intermediate II). This chain is UDP-N-acetylglucosamine--N-acetylmuramyl-(pentapeptide) pyrophosphoryl-undecaprenol N-acetylglucosamine transferase, found in Lachnospira eligens (strain ATCC 27750 / DSM 3376 / VPI C15-48 / C15-B4) (Eubacterium eligens).